Consider the following 392-residue polypeptide: DNA-directed RNA polymerase subunit Rpo1C (392 aa).

The protein belongs to the RNA polymerase beta' chain family. Part of the RNA polymerase complex.

It is found in the cytoplasm. It catalyses the reaction RNA(n) + a ribonucleoside 5'-triphosphate = RNA(n+1) + diphosphate. In terms of biological role, DNA-dependent RNA polymerase (RNAP) catalyzes the transcription of DNA into RNA using the four ribonucleoside triphosphates as substrates. Forms part of the jaw domain. This Metallosphaera sedula (strain ATCC 51363 / DSM 5348 / JCM 9185 / NBRC 15509 / TH2) protein is DNA-directed RNA polymerase subunit Rpo1C.